The primary structure comprises 496 residues: Alanine aminotransferase 1 (496 aa).

Residue Ala2 is modified to N-acetylalanine. Thr22 is subject to Phosphothreonine. Position 314 is an N6-(pyridoxal phosphate)lysine (Lys314).

Belongs to the class-I pyridoxal-phosphate-dependent aminotransferase family. Alanine aminotransferase subfamily. Homodimer. Pyridoxal 5'-phosphate is required as a cofactor. Liver, heart, skeletal muscle, etc.

The protein localises to the cytoplasm. The enzyme catalyses L-alanine + 2-oxoglutarate = pyruvate + L-glutamate. The protein operates within amino-acid degradation; L-alanine degradation via transaminase pathway; pyruvate from L-alanine: step 1/1. Functionally, catalyzes the reversible transamination between alanine and 2-oxoglutarate to form pyruvate and glutamate. Participates in cellular nitrogen metabolism and also in liver gluconeogenesis starting with precursors transported from skeletal muscles. The polypeptide is Alanine aminotransferase 1 (Gpt) (Rattus norvegicus (Rat)).